Here is a 46-residue protein sequence, read N- to C-terminus: Defensin-1 (46 aa).

4 cysteine pairs are disulfide-bonded: Cys3–Cys46, Cys14–Cys35, Cys20–Cys40, and Cys24–Cys42.

This sequence belongs to the DEFL family. As to expression, epidermis and vascular bundles of pods, stems, roots, leaves and wet or dry seeds.

Its function is as follows. Possesses antifungal activity sensitive to inorganic cations. In Pisum sativum (Garden pea), this protein is Defensin-1.